A 900-amino-acid chain; its full sequence is Endoglucanase H (900 aa).

An N-terminal signal peptide occupies residues 1–44; it reads MKKRLLVSFLVLSIIVGLLSFQSLGNYNSGLKIGAWVGTQPSES. Positions 45 to 298 constitute a GH26 domain; that stretch reads AIKSFQELQG…NSSPEALAAY (254 aa). The Proton donor role is filled by glutamate 131. The active-site Nucleophile is the glutamate 244. The interval 300–630 is catalytic; the sequence is EAIGAGSSNP…DTEILNALFN (331 aa). The segment at 303-326 is disordered; the sequence is GAGSSNPTPTPTWTSTPPSSSPKA. The segment covering 306 to 324 has biased composition (low complexity); the sequence is SSNPTPTPTWTSTPPSSSP. Glutamate 460 acts as the Proton donor in catalysis. Catalysis depends on glutamate 565, which acts as the Nucleophile. The CBM11 domain maps to 655-900; the sequence is AVGEKMLDDF…LLKAISEIPI (246 aa). A Dockerin domain is found at 827-900; that stretch reads PSIKHGDLNF…LLKAISEIPI (74 aa).

This sequence in the N-terminal section; belongs to the glycosyl hydrolase 5 (cellulase A) family. It in the C-terminal section; belongs to the glycosyl hydrolase 26 family.

The enzyme catalyses Endohydrolysis of (1-&gt;4)-beta-D-glucosidic linkages in cellulose, lichenin and cereal beta-D-glucans.. This enzyme catalyzes the endohydrolysis of 1,4-beta-glucosidic linkages in cellulose, lichenin and cereal beta-D-glucans. The polypeptide is Endoglucanase H (celH) (Acetivibrio thermocellus (strain ATCC 27405 / DSM 1237 / JCM 9322 / NBRC 103400 / NCIMB 10682 / NRRL B-4536 / VPI 7372) (Clostridium thermocellum)).